A 188-amino-acid chain; its full sequence is Ribose 1,5-bisphosphate phosphokinase PhnN (188 aa).

Residue 9-16 (GPSGAGKD) participates in ATP binding.

Belongs to the ribose 1,5-bisphosphokinase family.

The enzyme catalyses alpha-D-ribose 1,5-bisphosphate + ATP = 5-phospho-alpha-D-ribose 1-diphosphate + ADP. It participates in metabolic intermediate biosynthesis; 5-phospho-alpha-D-ribose 1-diphosphate biosynthesis; 5-phospho-alpha-D-ribose 1-diphosphate from D-ribose 5-phosphate (route II): step 3/3. Catalyzes the phosphorylation of ribose 1,5-bisphosphate to 5-phospho-D-ribosyl alpha-1-diphosphate (PRPP). In Pectobacterium atrosepticum (strain SCRI 1043 / ATCC BAA-672) (Erwinia carotovora subsp. atroseptica), this protein is Ribose 1,5-bisphosphate phosphokinase PhnN.